We begin with the raw amino-acid sequence, 442 residues long: Trigger factor (442 aa).

One can recognise a PPIase FKBP-type domain in the interval Gly-162 to Pro-247.

Belongs to the FKBP-type PPIase family. Tig subfamily.

The protein localises to the cytoplasm. The enzyme catalyses [protein]-peptidylproline (omega=180) = [protein]-peptidylproline (omega=0). In terms of biological role, involved in protein export. Acts as a chaperone by maintaining the newly synthesized protein in an open conformation. Functions as a peptidyl-prolyl cis-trans isomerase. This chain is Trigger factor, found in Lactobacillus acidophilus (strain ATCC 700396 / NCK56 / N2 / NCFM).